The primary structure comprises 40 residues: Adenylate kinase (40 aa).

10–15 (GAGKGT) lines the ATP pocket. Residues 30–40 (STGDMFIKAIK) form an NMP region. Thr31 provides a ligand contact to AMP.

The protein belongs to the adenylate kinase family. Monomer.

Its subcellular location is the cytoplasm. The enzyme catalyses AMP + ATP = 2 ADP. It functions in the pathway purine metabolism; AMP biosynthesis via salvage pathway; AMP from ADP: step 1/1. Its function is as follows. Catalyzes the reversible transfer of the terminal phosphate group between ATP and AMP. Plays an important role in cellular energy homeostasis and in adenine nucleotide metabolism. The chain is Adenylate kinase (adk) from Staphylococcus carnosus.